The following is a 257-amino-acid chain: Imidazole glycerol phosphate synthase subunit HisF (257 aa).

Residues Asp-11 and Asp-130 contribute to the active site.

It belongs to the HisA/HisF family. Heterodimer of HisH and HisF.

It is found in the cytoplasm. The catalysed reaction is 5-[(5-phospho-1-deoxy-D-ribulos-1-ylimino)methylamino]-1-(5-phospho-beta-D-ribosyl)imidazole-4-carboxamide + L-glutamine = D-erythro-1-(imidazol-4-yl)glycerol 3-phosphate + 5-amino-1-(5-phospho-beta-D-ribosyl)imidazole-4-carboxamide + L-glutamate + H(+). It functions in the pathway amino-acid biosynthesis; L-histidine biosynthesis; L-histidine from 5-phospho-alpha-D-ribose 1-diphosphate: step 5/9. In terms of biological role, IGPS catalyzes the conversion of PRFAR and glutamine to IGP, AICAR and glutamate. The HisF subunit catalyzes the cyclization activity that produces IGP and AICAR from PRFAR using the ammonia provided by the HisH subunit. In Psychromonas ingrahamii (strain DSM 17664 / CCUG 51855 / 37), this protein is Imidazole glycerol phosphate synthase subunit HisF.